The sequence spans 284 residues: Bifunctional protein FolD (284 aa).

Residues Gly166–Ser168 and Ser191 contribute to the NADP(+) site.

Belongs to the tetrahydrofolate dehydrogenase/cyclohydrolase family. Homodimer.

It carries out the reaction (6R)-5,10-methylene-5,6,7,8-tetrahydrofolate + NADP(+) = (6R)-5,10-methenyltetrahydrofolate + NADPH. The catalysed reaction is (6R)-5,10-methenyltetrahydrofolate + H2O = (6R)-10-formyltetrahydrofolate + H(+). The protein operates within one-carbon metabolism; tetrahydrofolate interconversion. In terms of biological role, catalyzes the oxidation of 5,10-methylenetetrahydrofolate to 5,10-methenyltetrahydrofolate and then the hydrolysis of 5,10-methenyltetrahydrofolate to 10-formyltetrahydrofolate. This Leptospira interrogans serogroup Icterohaemorrhagiae serovar copenhageni (strain Fiocruz L1-130) protein is Bifunctional protein FolD.